A 119-amino-acid polypeptide reads, in one-letter code: Large ribosomal subunit protein bL20 (119 aa).

It belongs to the bacterial ribosomal protein bL20 family.

Its function is as follows. Binds directly to 23S ribosomal RNA and is necessary for the in vitro assembly process of the 50S ribosomal subunit. It is not involved in the protein synthesizing functions of that subunit. In Caldicellulosiruptor bescii (strain ATCC BAA-1888 / DSM 6725 / KCTC 15123 / Z-1320) (Anaerocellum thermophilum), this protein is Large ribosomal subunit protein bL20.